The sequence spans 299 residues: S-methyl-5'-thioadenosine phosphorylase (299 aa).

Residues Ser14, 56–57 (RH), and 89–90 (SA) each bind phosphate. Met191 contributes to the substrate binding site. Residue Thr192 participates in phosphate binding. Residue 215–217 (DYD) coordinates substrate.

Belongs to the PNP/MTAP phosphorylase family. MTAP subfamily. Homohexamer. Dimer of a homotrimer.

It catalyses the reaction S-methyl-5'-thioadenosine + phosphate = 5-(methylsulfanyl)-alpha-D-ribose 1-phosphate + adenine. Its pathway is amino-acid biosynthesis; L-methionine biosynthesis via salvage pathway; S-methyl-5-thio-alpha-D-ribose 1-phosphate from S-methyl-5'-thioadenosine (phosphorylase route): step 1/1. In terms of biological role, catalyzes the reversible phosphorylation of S-methyl-5'-thioadenosine (MTA) to adenine and 5-methylthioribose-1-phosphate. Involved in the breakdown of MTA, a major by-product of polyamine biosynthesis. Responsible for the first step in the methionine salvage pathway after MTA has been generated from S-adenosylmethionine. Has broad substrate specificity with 6-aminopurine nucleosides as preferred substrates. The protein is S-methyl-5'-thioadenosine phosphorylase of Gloeobacter violaceus (strain ATCC 29082 / PCC 7421).